The sequence spans 229 residues: Peptidase E (229 aa).

Active-site charge relay system residues include Ser-120, Asp-135, and His-157.

Belongs to the peptidase S51 family.

It is found in the cytoplasm. The catalysed reaction is Dipeptidase E catalyzes the hydrolysis of dipeptides Asp-|-Xaa. It does not act on peptides with N-terminal Glu, Asn or Gln, nor does it cleave isoaspartyl peptides.. Hydrolyzes dipeptides containing N-terminal aspartate residues. May play a role in allowing the cell to use peptide aspartate to spare carbon otherwise required for the synthesis of the aspartate family of amino acids. This is Peptidase E (pepE) from Salmonella typhimurium (strain LT2 / SGSC1412 / ATCC 700720).